Here is a 250-residue protein sequence, read N- to C-terminus: UDP-2,3-diacylglucosamine hydrolase (250 aa).

Residues Asp7, His9, Asp40, Asn78, and His113 each coordinate Mn(2+). 78-79 (NR) contributes to the substrate binding site. Substrate is bound by residues Asp121, Ser159, Thr163, Lys166, and His194. His194 and His196 together coordinate Mn(2+).

Belongs to the LpxH family. It depends on Mn(2+) as a cofactor.

It is found in the cell inner membrane. It catalyses the reaction UDP-2-N,3-O-bis[(3R)-3-hydroxytetradecanoyl]-alpha-D-glucosamine + H2O = 2-N,3-O-bis[(3R)-3-hydroxytetradecanoyl]-alpha-D-glucosaminyl 1-phosphate + UMP + 2 H(+). Its pathway is glycolipid biosynthesis; lipid IV(A) biosynthesis; lipid IV(A) from (3R)-3-hydroxytetradecanoyl-[acyl-carrier-protein] and UDP-N-acetyl-alpha-D-glucosamine: step 4/6. Hydrolyzes the pyrophosphate bond of UDP-2,3-diacylglucosamine to yield 2,3-diacylglucosamine 1-phosphate (lipid X) and UMP by catalyzing the attack of water at the alpha-P atom. Involved in the biosynthesis of lipid A, a phosphorylated glycolipid that anchors the lipopolysaccharide to the outer membrane of the cell. This is UDP-2,3-diacylglucosamine hydrolase from Pseudomonas fluorescens (strain ATCC BAA-477 / NRRL B-23932 / Pf-5).